Reading from the N-terminus, the 436-residue chain is UPF0597 protein YhaM (436 aa).

The protein belongs to the UPF0597 family.

The chain is UPF0597 protein YhaM from Shigella flexneri serotype 5b (strain 8401).